The following is a 1342-amino-acid chain: DNA-directed RNA polymerase subunit beta (1342 aa).

2 positions are modified to N6-acetyllysine: K1022 and K1200.

It belongs to the RNA polymerase beta chain family. As to quaternary structure, the RNAP catalytic core consists of 2 alpha, 1 beta, 1 beta' and 1 omega subunit. When a sigma factor is associated with the core the holoenzyme is formed, which can initiate transcription.

It catalyses the reaction RNA(n) + a ribonucleoside 5'-triphosphate = RNA(n+1) + diphosphate. In terms of biological role, DNA-dependent RNA polymerase catalyzes the transcription of DNA into RNA using the four ribonucleoside triphosphates as substrates. In Escherichia fergusonii (strain ATCC 35469 / DSM 13698 / CCUG 18766 / IAM 14443 / JCM 21226 / LMG 7866 / NBRC 102419 / NCTC 12128 / CDC 0568-73), this protein is DNA-directed RNA polymerase subunit beta.